A 373-amino-acid chain; its full sequence is Histidinol-phosphate aminotransferase (373 aa).

The residue at position 233 (Lys233) is an N6-(pyridoxal phosphate)lysine.

This sequence belongs to the class-II pyridoxal-phosphate-dependent aminotransferase family. Histidinol-phosphate aminotransferase subfamily. As to quaternary structure, homodimer. Pyridoxal 5'-phosphate is required as a cofactor.

The catalysed reaction is L-histidinol phosphate + 2-oxoglutarate = 3-(imidazol-4-yl)-2-oxopropyl phosphate + L-glutamate. Its pathway is amino-acid biosynthesis; L-histidine biosynthesis; L-histidine from 5-phospho-alpha-D-ribose 1-diphosphate: step 7/9. This Nitratidesulfovibrio vulgaris (strain ATCC 29579 / DSM 644 / CCUG 34227 / NCIMB 8303 / VKM B-1760 / Hildenborough) (Desulfovibrio vulgaris) protein is Histidinol-phosphate aminotransferase.